Here is a 78-residue protein sequence, read N- to C-terminus: Large ribosomal subunit protein bL28 (78 aa).

It belongs to the bacterial ribosomal protein bL28 family.

The protein is Large ribosomal subunit protein bL28 of Escherichia coli O139:H28 (strain E24377A / ETEC).